The sequence spans 353 residues: MSDAQKFQLGTIGALSLSVVSSVSIVICNKALISTLGFTFATTLTSWHLLVTFCSLHVALWMKFFEHKPFDPRAVLGFGVLNGISIGLLNLSLGFNSVGFYQMTKLAIIPCTVVLETIFFRKMFSRKIQFSLVILLLGVGIATVTDLQLNMLGSVLSLLAVITTCVAQIMTNTIQKKYKVSSTQLLYQSCPYQAITLFVTGPFLDGLLTNQNVFAFKYTSQVVFFIVLSCLISVSVNFSTFLVIGKTSPVTYQVLGHLKTCLVLAFGYLLLKDAFSWRNILGILVAVIGMVLYSYYCTLETQQKATETSTQLPQMDENEKDPLVSAENGSGLISDNGVQKQDPVWNSNKDFQA.

10 helical membrane-spanning segments follow: residues 7 to 27, 31 to 51, 75 to 95, 100 to 120, 132 to 152, 154 to 174, 194 to 214, 224 to 244, 250 to 270, and 280 to 300; these read FQLGTIGALSLSVVSSVSIVI, ALISTLGFTFATTLTSWHLLV, VLGFGVLNGISIGLLNLSLGF, FYQMTKLAIIPCTVVLETIFF, LVILLLGVGIATVTDLQLNML, SVLSLLAVITTCVAQIMTNTI, AITLFVTGPFLDGLLTNQNVF, FFIVLSCLISVSVNFSTFLVI, VTYQVLGHLKTCLVLAFGYLL, and ILGILVAVIGMVLYSYYCTLE. The interval 308–353 is disordered; the sequence is TSTQLPQMDENEKDPLVSAENGSGLISDNGVQKQDPVWNSNKDFQA. Residues 327–353 are compositionally biased toward polar residues; the sequence is ENGSGLISDNGVQKQDPVWNSNKDFQA. A Phosphoserine modification is found at Ser334.

Belongs to the TPT transporter family. TPT (TC 2.A.7.9) subfamily. As to expression, ubiquitous.

The protein localises to the golgi apparatus membrane. In terms of biological role, nucleotide-sugar transporter that transports UDP-xylose and UMP in a strict counter-exchange mode. This chain is UDP-xylose transporter 2, found in Arabidopsis thaliana (Mouse-ear cress).